Reading from the N-terminus, the 92-residue chain is SPbeta prophage-derived DNA-binding protein HU 2 (92 aa).

The residue at position 4 (threonine 4) is a Phosphothreonine. The interval 55–77 (RAARKGRNPQTGEEIDIPATKAP) is disordered.

The protein belongs to the bacterial histone-like protein family. Homodimer.

Its function is as follows. Histone-like DNA-binding protein which is capable of wrapping DNA to stabilize it, and thus to prevent its denaturation under extreme environmental conditions. This chain is SPbeta prophage-derived DNA-binding protein HU 2 (hup2), found in Bacillus subtilis (strain 168).